A 304-amino-acid polypeptide reads, in one-letter code: Voltage-dependent anion channel-forming protein YneE (304 aa).

4 helical membrane passes run 28-48 (LLLN…YTHL), 50-70 (IKFT…FLGF), 194-214 (VLAG…TLIL), and 220-240 (LFCI…TPFI).

This sequence belongs to the anion channel-forming bestrophin (TC 1.A.46) family.

It localises to the cell membrane. In Escherichia coli (strain K12), this protein is Voltage-dependent anion channel-forming protein YneE (yneE).